We begin with the raw amino-acid sequence, 1214 residues long: Zinc finger E-box-binding homeobox 2 (1214 aa).

The interval 1–101 is disordered; that stretch reads MKQPIMADGP…GVEHPWHNNE (101 aa). Positions 12–24 are enriched in basic residues; sequence CKRRKQANPRRKN. Polar residues predominate over residues 57-74; sequence DQETSPASVPNHESSPHV. A compositionally biased stretch (basic and acidic residues) spans 89-98; it reads REGGVEHPWH. Ser-142 bears the Phosphoserine mark. 3 C2H2-type zinc fingers span residues 211–234, 241–263, and 282–304; these read LTCP…KYRH, FSCP…MVTH, and FKCT…LRIH. Residues 310–334 form a C2H2-type 4; atypical zinc finger; the sequence is YECPNCKKRFSHSGSYSSHISSKKC. 3 positions are modified to phosphoserine: Ser-356, Ser-360, and Ser-364. N6-acetyllysine is present on Lys-377. A Glycyl lysine isopeptide (Lys-Gly) (interchain with G-Cter in SUMO); alternate cross-link involves residue Lys-391. Residue Lys-391 forms a Glycyl lysine isopeptide (Lys-Gly) (interchain with G-Cter in SUMO2); alternate linkage. Positions 437 to 487 are SMAD-MH2 binding domain; it reads QHLGVGMEAPLLGFPTMNSNLSEVQKVLQIVDNTVSRQKMDCKAEEISKLK. Residues Lys-479 and Lys-555 each participate in a glycyl lysine isopeptide (Lys-Gly) (interchain with G-Cter in SUMO2) cross-link. The C2H2-type 5; atypical zinc finger occupies 581-605; that stretch reads FSCQFCKESFPGPIPLHQHERYLCK. Glycyl lysine isopeptide (Lys-Gly) (interchain with G-Cter in SUMO2) cross-links involve residues Lys-611 and Lys-632. Positions 644–703 form a DNA-binding region, homeobox; atypical; the sequence is GMTSPINPYKDHMSVLKAYYAMNMEPNSDELLKISIAVGLPQEFVKEWFEQRKVYQYSNS. The residue at position 647 (Ser-647) is a Phosphoserine. Residues 702–715 are compositionally biased toward low complexity; sequence NSRSPSLERSSKPL. 3 disordered regions span residues 702–740, 771–810, and 832–857; these read NSRS…DSIT, PVEK…SSEE, and ATKN…ENSD. Residue Lys-713 forms a Glycyl lysine isopeptide (Lys-Gly) (interchain with G-Cter in SUMO2) linkage. Phosphoserine is present on residues Ser-731 and Ser-780. Low complexity-rich tracts occupy residues 780 to 808 and 840 to 854; these read SNTP…SFSS and SSIS…SSSE. Thr-782 is modified (phosphothreonine). The residue at position 784 (Ser-784) is a Phosphoserine. Lys-866 participates in a covalent cross-link: Glycyl lysine isopeptide (Lys-Gly) (interchain with G-Cter in SUMO); alternate. Lys-866 participates in a covalent cross-link: Glycyl lysine isopeptide (Lys-Gly) (interchain with G-Cter in SUMO2); alternate. 2 C2H2-type zinc fingers span residues 999-1021 and 1027-1049; these read YACD…KYEH and HQCQ…SRLH. Residues 1055 to 1076 form a C2H2-type 8; atypical zinc finger; the sequence is YQCDKCGKRFSHSGSYSQHMNH. The interval 1117 to 1214 is disordered; that stretch reads TPQGYSDSEE…HEEDNMEDGM (98 aa). Residues Ser-1122 and Ser-1124 each carry the phosphoserine modification. The span at 1127–1155 shows a compositional bias: basic and acidic residues; it reads RESMPRDGESEKEHEKEGEDGYGKLGRQD. The segment covering 1156 to 1167 has biased composition (acidic residues); that stretch reads GDEEFEEEEEES. 2 stretches are compositionally biased toward basic and acidic residues: residues 1168–1179 and 1186–1205; these read ENKSMDTDPETI and GDHS…KSDH. The residue at position 1203 (Ser-1203) is a Phosphoserine.

This sequence belongs to the delta-EF1/ZFH-1 C2H2-type zinc-finger family. As to quaternary structure, binds activated SMAD1, activated SMAD2 and activated SMAD3; binding with SMAD4 is not detected. Interacts with CBX4 and CTBP1. In terms of processing, sumoylation on Lys-391 and Lys-866 is promoted by the E3 SUMO-protein ligase CBX4, and impairs interaction with CTBP1 and transcription repression activity.

It localises to the nucleus. The protein resides in the chromosome. In terms of biological role, transcriptional inhibitor that binds to DNA sequence 5'-CACCT-3' in different promoters. Represses transcription of E-cadherin. Represses expression of MEOX2. This chain is Zinc finger E-box-binding homeobox 2, found in Homo sapiens (Human).